Here is a 550-residue protein sequence, read N- to C-terminus: Glucose-6-phosphate isomerase (550 aa).

The active-site Proton donor is the glutamate 356. Residues histidine 387 and lysine 515 contribute to the active site.

Belongs to the GPI family.

It localises to the cytoplasm. It carries out the reaction alpha-D-glucose 6-phosphate = beta-D-fructose 6-phosphate. The protein operates within carbohydrate biosynthesis; gluconeogenesis. It functions in the pathway carbohydrate degradation; glycolysis; D-glyceraldehyde 3-phosphate and glycerone phosphate from D-glucose: step 2/4. Catalyzes the reversible isomerization of glucose-6-phosphate to fructose-6-phosphate. The chain is Glucose-6-phosphate isomerase from Photobacterium profundum (strain SS9).